We begin with the raw amino-acid sequence, 653 residues long: Macrolide export ATP-binding/permease protein MacB (653 aa).

The region spanning 6–244 is the ABC transporter domain; that stretch reads IELQGVSRSY…PPLLPCSAHP (239 aa). Residue 42-49 participates in ATP binding; sequence GSSGSGKS. 4 consecutive transmembrane segments (helical) span residues 275-295, 525-545, 576-596, and 616-636; these read LLTM…VGLG, FSVL…LGVM, FLIE…LLAL, and WPAV…FGYW.

The protein belongs to the ABC transporter superfamily. Macrolide exporter (TC 3.A.1.122) family. As to quaternary structure, homodimer. Part of the tripartite efflux system MacAB-TolC, which is composed of an inner membrane transporter, MacB, a periplasmic membrane fusion protein, MacA, and an outer membrane component, TolC. The complex forms a large protein conduit and can translocate molecules across both the inner and outer membranes. Interacts with MacA.

The protein localises to the cell inner membrane. Functionally, part of the tripartite efflux system MacAB-TolC. MacB is a non-canonical ABC transporter that contains transmembrane domains (TMD), which form a pore in the inner membrane, and an ATP-binding domain (NBD), which is responsible for energy generation. Confers resistance against macrolides. In Sodalis glossinidius (strain morsitans), this protein is Macrolide export ATP-binding/permease protein MacB.